We begin with the raw amino-acid sequence, 200 residues long: Transcription factor FapR (200 aa).

This sequence belongs to the FapR family.

In terms of biological role, transcriptional factor involved in regulation of membrane lipid biosynthesis by repressing genes involved in fatty acid and phospholipid metabolism. The sequence is that of Transcription factor FapR from Caldanaerobacter subterraneus subsp. tengcongensis (strain DSM 15242 / JCM 11007 / NBRC 100824 / MB4) (Thermoanaerobacter tengcongensis).